We begin with the raw amino-acid sequence, 546 residues long: MARYIFITGGVVSSLGKGLASAALGALLQARGYKVRLRKLDPYLNVDPGTMSPYQHGEVFVTDDGAETDLDLGHYERFTGVSATRADNITTGQIYKTIIEKERRGDYLGATVQVIPHVTGEIKDFVLSDPGPDVDFVLIEVGGTVGDIEGLPFFEAIRQLGQELPRGHACYIHLTLLPFIKTAGEMKTKPTQHSVKELRSIGIQPDILLCRTEFPIPEGERRKIAQFCNVRPSAVIQAMDSANIYAVPLDYHHEGLDTEVLDVFGLLDQAPKPDLTRWEEISHRLSHPDGEVNIAIVGKYTGLTDAYKSLVEALVHGGVANNVRVKFDWIEGEAFEKDEDLIAVRLANVHGVLVPGAFGERGSEGMIRAVQFAREHQIPYFGICFGMQMAMIEAARNLAGIRQASSTEFGPTSEPIVGLMTEWTRGNEKQVRAEGGELGGTMRCGAYDAVLAPGSRVAEIYGSTAIQERHRHRYEVNIGYRERIEATGLKFTGLSPDGQLPEICERADHPWFVGVQYHPELKSRPFDPHPLFASFIGAAKERSRLV.

Residues 1-266 are amidoligase domain; the sequence is MARYIFITGG…DTEVLDVFGL (266 aa). Position 13 (serine 13) interacts with CTP. Serine 13 lines the UTP pocket. 14-19 provides a ligand contact to ATP; the sequence is SLGKGL. Tyrosine 54 is an L-glutamine binding site. Aspartate 71 contributes to the ATP binding site. Mg(2+)-binding residues include aspartate 71 and glutamate 140. CTP-binding positions include 147-149, 187-192, and lysine 223; these read DIE and KTKPTQ. UTP contacts are provided by residues 187 to 192 and lysine 223; that span reads KTKPTQ. A Glutamine amidotransferase type-1 domain is found at 293–545; it reads NIAIVGKYTG…IGAAKERSRL (253 aa). Alanine 357 contacts L-glutamine. Catalysis depends on cysteine 384, which acts as the Nucleophile; for glutamine hydrolysis. L-glutamine contacts are provided by residues 385–388, glutamate 408, and arginine 473; that span reads FGMQ. Residues histidine 518 and glutamate 520 contribute to the active site.

The protein belongs to the CTP synthase family. As to quaternary structure, homotetramer.

The enzyme catalyses UTP + L-glutamine + ATP + H2O = CTP + L-glutamate + ADP + phosphate + 2 H(+). It carries out the reaction L-glutamine + H2O = L-glutamate + NH4(+). It catalyses the reaction UTP + NH4(+) + ATP = CTP + ADP + phosphate + 2 H(+). It functions in the pathway pyrimidine metabolism; CTP biosynthesis via de novo pathway; CTP from UDP: step 2/2. Its activity is regulated as follows. Allosterically activated by GTP, when glutamine is the substrate; GTP has no effect on the reaction when ammonia is the substrate. The allosteric effector GTP functions by stabilizing the protein conformation that binds the tetrahedral intermediate(s) formed during glutamine hydrolysis. Inhibited by the product CTP, via allosteric rather than competitive inhibition. In terms of biological role, catalyzes the ATP-dependent amination of UTP to CTP with either L-glutamine or ammonia as the source of nitrogen. Regulates intracellular CTP levels through interactions with the four ribonucleotide triphosphates. The polypeptide is CTP synthase (Phenylobacterium zucineum (strain HLK1)).